The chain runs to 320 residues: Mitochondrial fission regulator 1-like-B (320 aa).

Positions 1–37 (MASLGAAAEPERSLFGKDGAEACESPEGRRSGRRKRT) are disordered. Residues 9–30 (EPERSLFGKDGAEACESPEGRR) are compositionally biased toward basic and acidic residues.

This sequence belongs to the MTFR1 family.

The protein localises to the mitochondrion outer membrane. In terms of biological role, mitochondrial protein required for adaptation of miochondrial dynamics to metabolic changes. Regulates mitochondrial morphology at steady state and mediates AMPK-dependent stress-induced mitochondrial fragmentation via the control of OPA1 levels. This is Mitochondrial fission regulator 1-like-B (mtfr1l-b) from Xenopus laevis (African clawed frog).